The primary structure comprises 212 residues: Pyridoxine/pyridoxamine 5'-phosphate oxidase (212 aa).

Residues Arg8–Tyr11 and Lys66 contribute to the substrate site. FMN is bound by residues Arg61 to Lys66, Phe76 to Thr77, Arg82, Lys83, and Gln105. The substrate site is built by Tyr123, Arg127, and Ser131. Residues Gln140 to Ser141 and Trp184 contribute to the FMN site. Substrate is bound at residue Arg190–His192. Arg194 lines the FMN pocket.

Belongs to the pyridoxamine 5'-phosphate oxidase family. As to quaternary structure, homodimer. FMN is required as a cofactor.

The catalysed reaction is pyridoxamine 5'-phosphate + O2 + H2O = pyridoxal 5'-phosphate + H2O2 + NH4(+). The enzyme catalyses pyridoxine 5'-phosphate + O2 = pyridoxal 5'-phosphate + H2O2. It participates in cofactor metabolism; pyridoxal 5'-phosphate salvage; pyridoxal 5'-phosphate from pyridoxamine 5'-phosphate: step 1/1. The protein operates within cofactor metabolism; pyridoxal 5'-phosphate salvage; pyridoxal 5'-phosphate from pyridoxine 5'-phosphate: step 1/1. Functionally, catalyzes the oxidation of either pyridoxine 5'-phosphate (PNP) or pyridoxamine 5'-phosphate (PMP) into pyridoxal 5'-phosphate (PLP). The polypeptide is Pyridoxine/pyridoxamine 5'-phosphate oxidase (Cupriavidus metallidurans (strain ATCC 43123 / DSM 2839 / NBRC 102507 / CH34) (Ralstonia metallidurans)).